Consider the following 534-residue polypeptide: H(+)/hexose cotransporter 1 (534 aa).

Residues 1-21 (MAGGGVVVVSGRGLSTGDYRG) lie on the Cytoplasmic side of the membrane. A helical membrane pass occupies residues 22–42 (GLTVYVVMVAFMAACGGLLLG). At 43–87 (YDNGVTGGVVSLEAFEKKFFPDVWAKKQEVHEDSPYCTYDNAKLQ) the chain is on the extracellular side. Residues 88–108 (LFVSSLFLAGLVSCLFASWIT) form a helical membrane-spanning segment. Topologically, residues 109 to 114 (RNWGRK) are cytoplasmic. The chain crosses the membrane as a helical span at residues 115–135 (VTMGIGGAFFVAGGLVNAFAQ). Over 136–144 (DMAMLIVGR) the chain is Extracellular. A helical membrane pass occupies residues 145-165 (VLLGFGVGLGSQVVPQYLSEV). Residues 166–173 (APFSHRGM) lie on the Cytoplasmic side of the membrane. A helical membrane pass occupies residues 174–194 (LNIGYQLFVTIGILIAGLVNY). Residues 195 to 204 (AVRDWENGWR) lie on the Extracellular side of the membrane. A helical membrane pass occupies residues 205-225 (LSLGPAAAPGAILFLGSLVLP). At 226 to 299 (ESPNFLVEKG…TSFVIQFFQQ (74 aa)) the chain is on the cytoplasmic side. Residues 300 to 322 (FTGINAIIFYVPVLFSSLGSANS) traverse the membrane as a helical segment. Over 323 to 328 (AALLNT) the chain is Extracellular. A helical transmembrane segment spans residues 329-349 (VVVGAVNVGSTLIAVMFSDKF). Residues 350 to 352 (GRR) lie on the Cytoplasmic side of the membrane. A helical membrane pass occupies residues 353-373 (FLLIEGGIQCCLAMLTTGVVL). At 374 to 387 (AIEFAKYGTDPLPK) the chain is on the extracellular side. A helical transmembrane segment spans residues 388-408 (AVASGILAVICIFISGFAWSW). Residues 409–433 (GPMGWLIPSEIFTLETRPAGTAVAV) lie on the Cytoplasmic side of the membrane. The chain crosses the membrane as a helical span at residues 434-454 (VGNFLFSFVIGQAFVSMLCAM). Residues 455-456 (EY) lie on the Extracellular side of the membrane. Residues 457 to 477 (GVFLFFAGWLVIMVLCAIFLL) traverse the membrane as a helical segment. Residues 478-534 (PETKGVPIERVQALYARHWFWNRVMGPAAAEVIAEDEKRVAAASAIIKEEELSKAMK) lie on the Cytoplasmic side of the membrane.

Belongs to the major facilitator superfamily. Sugar transporter (TC 2.A.1.1) family.

It localises to the membrane. Its function is as follows. Active uptake of hexoses. In Parachlorella kessleri (Green alga), this protein is H(+)/hexose cotransporter 1 (HUP1).